The sequence spans 434 residues: V-type ATP synthase beta chain (434 aa).

It belongs to the ATPase alpha/beta chains family.

In terms of biological role, produces ATP from ADP in the presence of a proton gradient across the membrane. The V-type beta chain is a regulatory subunit. This is V-type ATP synthase beta chain from Borrelia garinii subsp. bavariensis (strain ATCC BAA-2496 / DSM 23469 / PBi) (Borreliella bavariensis).